The chain runs to 677 residues: Threonine--tRNA ligase (677 aa).

A TGS domain is found at Met-1–Ala-59. Residues Asp-255–Pro-561 form a catalytic region. Residues Cys-360, His-411, and His-538 each contribute to the Zn(2+) site.

It belongs to the class-II aminoacyl-tRNA synthetase family. Homodimer. Zn(2+) is required as a cofactor.

The protein localises to the cytoplasm. It catalyses the reaction tRNA(Thr) + L-threonine + ATP = L-threonyl-tRNA(Thr) + AMP + diphosphate + H(+). Catalyzes the attachment of threonine to tRNA(Thr) in a two-step reaction: L-threonine is first activated by ATP to form Thr-AMP and then transferred to the acceptor end of tRNA(Thr). Also edits incorrectly charged L-seryl-tRNA(Thr). The polypeptide is Threonine--tRNA ligase (Bifidobacterium longum (strain DJO10A)).